A 623-amino-acid chain; its full sequence is Pheromone-processing carboxypeptidase KEX1 (623 aa).

An N-terminal signal peptide occupies residues 1–16 (MLKLLCLLLPLVAVSA). At 17-512 (SPIDLGSQKD…TDDSAAHGNP (496 aa)) the chain is on the lumenal side. N-linked (GlcNAc...) asparagine glycosylation occurs at Asn54. Residue Ser177 is part of the active site. Asn258 carries an N-linked (GlcNAc...) asparagine glycan. Asp383 is an active-site residue. Residues Asn430 and Asn438 are each glycosylated (N-linked (GlcNAc...) asparagine). His441 is an active-site residue. Residues Asn469 and Asn483 are each glycosylated (N-linked (GlcNAc...) asparagine). A helical transmembrane segment spans residues 513 to 533 (FFYYVFELFVIVLLLCGLVYL). Over 534 to 623 (YQYYSNSAPH…EMDSHGTSEK (90 aa)) the chain is Cytoplasmic. Positions 597 to 623 (QEPYKPLDKGANADLDIEMDSHGTSEK) are disordered.

Belongs to the peptidase S10 family.

Its subcellular location is the golgi apparatus. It is found in the trans-Golgi network membrane. The catalysed reaction is Preferential release of a C-terminal arginine or lysine residue.. Its function is as follows. Protease with a carboxypeptidase B-like function involved in the C-terminal processing of the lysine and arginine residues from protein precursors. Promotes cell fusion and is involved in the programmed cell death. This chain is Pheromone-processing carboxypeptidase KEX1 (KEX1), found in Komagataella phaffii (strain GS115 / ATCC 20864) (Yeast).